A 101-amino-acid polypeptide reads, in one-letter code: Small ribosomal subunit protein uS14 (101 aa).

The protein belongs to the universal ribosomal protein uS14 family. Part of the 30S ribosomal subunit. Contacts proteins S3 and S10.

Binds 16S rRNA, required for the assembly of 30S particles and may also be responsible for determining the conformation of the 16S rRNA at the A site. In Proteus mirabilis (strain HI4320), this protein is Small ribosomal subunit protein uS14.